The chain runs to 108 residues: Thiosulfate sulfurtransferase GlpE (108 aa).

The Rhodanese domain maps to 17–105 (HQGAAVLVDI…WHRHFPADVA (89 aa)). The active-site Cysteine persulfide intermediate is C65.

It belongs to the GlpE family.

It is found in the cytoplasm. The enzyme catalyses thiosulfate + hydrogen cyanide = thiocyanate + sulfite + 2 H(+). The catalysed reaction is thiosulfate + [thioredoxin]-dithiol = [thioredoxin]-disulfide + hydrogen sulfide + sulfite + 2 H(+). Functionally, transferase that catalyzes the transfer of sulfur from thiosulfate to thiophilic acceptors such as cyanide or dithiols. May function in a CysM-independent thiosulfate assimilation pathway by catalyzing the conversion of thiosulfate to sulfite, which can then be used for L-cysteine biosynthesis. The polypeptide is Thiosulfate sulfurtransferase GlpE (Salmonella arizonae (strain ATCC BAA-731 / CDC346-86 / RSK2980)).